Consider the following 562-residue polypeptide: Arf-GAP domain and FG repeat-containing protein 1 (562 aa).

The Arf-GAP domain maps to 11–135; it reads EKHLKMLRDM…WYVPPEQAKV (125 aa). The segment at 29 to 52 adopts a C4-type zinc-finger fold; the sequence is CFDCDQRGPTYVNMTVGSFVCTSC. The disordered stretch occupies residues 145–193; that stretch reads GSSASSTSSTPEVKPLKSLLGDSAPTLHLNKGTPSQSPVVGRSQGQQQE. Serine 167 is subject to Phosphoserine. Polar residues predominate over residues 176 to 191; it reads GTPSQSPVVGRSQGQQ. Threonine 177 bears the Phosphothreonine mark. 2 positions are modified to phosphoserine: serine 181 and serine 362. The O-linked (GlcNAc) serine glycan is linked to serine 367.

As to quaternary structure, interacts with EPS15R and EPS15. Interacts with FCHO1. Post-translationally, O-glycosylated. In terms of tissue distribution, ubiquitously expressed.

It localises to the nucleus. The protein resides in the cytoplasmic vesicle. Functionally, required for vesicle docking or fusion during acrosome biogenesis. May play a role in RNA trafficking or localization. In case of infection by HIV-1, acts as a cofactor for viral Rev and promotes movement of Rev-responsive element-containing RNAs from the nuclear periphery to the cytoplasm. This step is essential for HIV-1 replication. This chain is Arf-GAP domain and FG repeat-containing protein 1 (AGFG1), found in Homo sapiens (Human).